The sequence spans 317 residues: MSCTRMIHVLDPRPLTSSVMPVDMAMRICLAHSPPLKSFLGPYNGLQRRHFVNKPKPLKPCLSVKQEAKSQKEWKSPHSQAKKRVVFADSKGLSLTAIHVFSDLPEEPAWDLQFDLLDLNDISSSLKLHEEKNLVFDFPQPSSDYLSFRDRFQKNFVCLENCSLQDRTVTGTVKVKNVSFEKKVQVRITFDTWKTYTDVDCVYLKNVYGSSDSDTFSFAIDLPRVIPTEEKIEFCISYHANGRVFWDNNEAQNYRIVHVQWKPDGVQTQVAPKDCAFQQVPLKTELEPTVFGSPRLASGLFPEWQSWGRVENLASYR.

The PP1-binding motif signature appears at 84 to 87 (RVVF). An interaction with EPM2A region spans residues 141-263 (PSSDYLSFRD…YRIVHVQWKP (123 aa)). The 109-residue stretch at 149 to 257 (RDRFQKNFVC…NNEAQNYRIV (109 aa)) folds into the CBM21 domain.

In terms of assembly, interacts with PPP1CC catalytic subunit of PP1 and associates with glycogen. Forms complexes with glycogen phosphorylase, glycogen synthase and phosphorylase kinase which is necessary for its regulation of PP1 activity. Also interacts with EPM2A/laforin. Ubiquitinated by NHLRC1/malin in a EPM2A/laforin-dependent manner.

Acts as a glycogen-targeting subunit for PP1 and regulates its activity. Activates glycogen synthase, reduces glycogen phosphorylase activity and limits glycogen breakdown. Dramatically increases basal and insulin-stimulated glycogen synthesis upon overexpression in a variety of cell types. The sequence is that of Protein phosphatase 1 regulatory subunit 3C from Rattus norvegicus (Rat).